Consider the following 537-residue polypeptide: MWDSSMFLSTLTPKFYVALTGTSSLISGLILIFEWWYFRKYGTSFIEQVSINHISPWINGSDGQSESSNGSGSSSSSGSSSSSNGGAGGGGSGGAGASGSGSATTSTGTQMPECKVWRNPLNLFRGAEYQRFFWATSKEPLTYYDMNLSAQDHQTFFTCEGDARKEEYEIMQTAWRERNPMQRIKSAHSALEINAECAPAYILLAEEEAMTIMEAEKILKTALKVAEINYRKSQATQHQGAIADGMHRRDTNVLIYIKRRLAMCARKLGKLKEAAKMFRDLTKEIPSIMSVLNIHENLIETLLEMQAYADCHAILAKYDDISLPKSATICYTAALLKARAVADKFSPDIASKRGLSQAEMSAVEAIHRAVEFNPHVPKYLLETKRLILPPEHILKRGDSEALAYAFFHLKHWKQVEGALNLLHCTWEGTFRMLPYPLERGHLFYPYPTCTECADRELLPAFHEVSVYPKKELPFFILFTAGLCSITALLALATHQYPEPMGHLAQTVLTWISYPFQLLKERIEAFWPCNLLQQLSRV.

A helical transmembrane segment spans residues 15–35 (FYVALTGTSSLISGLILIFEW). The tract at residues 61-111 (SDGQSESSNGSGSSSSSGSSSSSNGGAGGGGSGGAGASGSGSATTSTGTQM) is disordered. Residues 67–84 (SSNGSGSSSSSGSSSSSN) show a composition bias toward low complexity. Gly residues predominate over residues 85 to 99 (GGAGGGGSGGAGASG). Low complexity predominate over residues 100-109 (SGSATTSTGT). The helical transmembrane segment at 472-492 (LPFFILFTAGLCSITALLALA) threads the bilayer.

This sequence belongs to the ST7 family.

The protein localises to the membrane. This chain is Protein ST7 homolog, found in Drosophila melanogaster (Fruit fly).